Consider the following 696-residue polypeptide: Polyribonucleotide nucleotidyltransferase (696 aa).

Residues Asp-486 and Asp-492 each contribute to the Mg(2+) site. Residues 553–612 (PRIIVRNIPKDRIGELIGPGGKNVRGISELTGAELYIEDDGRVTISGSNQESAEKAAKMV) enclose the KH domain. Residues 622–690 (GKIYEGKVKR…KTGKIDLSRK (69 aa)) enclose the S1 motif domain.

It belongs to the polyribonucleotide nucleotidyltransferase family. Mg(2+) is required as a cofactor.

It localises to the cytoplasm. It catalyses the reaction RNA(n+1) + phosphate = RNA(n) + a ribonucleoside 5'-diphosphate. In terms of biological role, involved in mRNA degradation. Catalyzes the phosphorolysis of single-stranded polyribonucleotides processively in the 3'- to 5'-direction. The sequence is that of Polyribonucleotide nucleotidyltransferase from Leptospira borgpetersenii serovar Hardjo-bovis (strain JB197).